A 119-amino-acid polypeptide reads, in one-letter code: Vitelline membrane protein Vm34Ca (119 aa).

An N-terminal signal peptide occupies residues 1 to 19 (MKCIAIVSTICLLAAFVAA). In terms of domain architecture, VM spans 69 to 106 (SIPAPPCPKNYLFSCQPNLAPVPCSAPAPSYGSAGAYS).

Belongs to the vitelline membrane protein family. In terms of tissue distribution, follicle cells.

The protein resides in the secreted. Major early eggshell protein. The polypeptide is Vitelline membrane protein Vm34Ca (Vm34Ca) (Drosophila melanogaster (Fruit fly)).